Here is an 84-residue protein sequence, read N- to C-terminus: UPF0729 protein F18A11.3 (84 aa).

The chain crosses the membrane as a helical span at residues 1–21; it reads MVCLPCIFLPIMMAIYMKFIM.

This sequence belongs to the UPF0729 family.

The protein localises to the cell membrane. The chain is UPF0729 protein F18A11.3 from Caenorhabditis elegans.